Consider the following 144-residue polypeptide: Large ribosomal subunit protein uL15 (144 aa).

Positions 1-54 (MRLNTLSPAAGAKHAPKRVGRGMGSGLGKTAGRGHKGQKSRSGGGVRPGFEGGQ) are disordered. 2 stretches are compositionally biased toward gly residues: residues 21–31 (RGMGSGLGKTA) and 42–52 (SGGGVRPGFEG).

It belongs to the universal ribosomal protein uL15 family. Part of the 50S ribosomal subunit.

In terms of biological role, binds to the 23S rRNA. The protein is Large ribosomal subunit protein uL15 of Shewanella oneidensis (strain ATCC 700550 / JCM 31522 / CIP 106686 / LMG 19005 / NCIMB 14063 / MR-1).